Here is a 141-residue protein sequence, read N- to C-terminus: MSTAETPQQPQQQQKLRWGIAWIYSSSNNTIITITDLTGAETVARVSGGMVVRADKDKPSPWAAMQAAYKAAQLALARGINAVHIKVRGPGGYGMKVPGPGASAAIRALARSGLVIGRIEDVTPIPHDTIRPPSGRKGRRV.

The protein belongs to the universal ribosomal protein uS11 family. Part of the 30S ribosomal subunit.

Its function is as follows. Located on the platform of the 30S subunit. This Pyrobaculum calidifontis (strain DSM 21063 / JCM 11548 / VA1) protein is Small ribosomal subunit protein uS11.